The following is a 128-amino-acid chain: Lymphocyte antigen 6D (128 aa).

Positions 1–20 are cleaved as a signal peptide; the sequence is MKTVLLFLVALAAAAGPAQA. Positions 21–108 constitute a UPAR/Ly6 domain; the sequence is LRCHVCTSSS…WQSAAPARTS (88 aa). Intrachain disulfides connect cysteine 23-cysteine 45, cysteine 26-cysteine 32, cysteine 38-cysteine 63, cysteine 67-cysteine 86, and cysteine 87-cysteine 92. The GPI-anchor amidated serine moiety is linked to residue serine 98. Residues 99-128 constitute a propeptide, removed in mature form; sequence WQSAAPARTSAHLGLALACGLLALLWAPGL.

Its subcellular location is the cell membrane. May act as a specification marker at earliest stage specification of lymphocytes between B- and T-cell development. Marks the earliest stage of B-cell specification. The chain is Lymphocyte antigen 6D (LY6D) from Bos taurus (Bovine).